A 287-amino-acid polypeptide reads, in one-letter code: Bifunctional protein FolD (287 aa).

NADP(+) is bound by residues 166-168 (GAS) and I232.

Belongs to the tetrahydrofolate dehydrogenase/cyclohydrolase family. Homodimer.

It carries out the reaction (6R)-5,10-methylene-5,6,7,8-tetrahydrofolate + NADP(+) = (6R)-5,10-methenyltetrahydrofolate + NADPH. It catalyses the reaction (6R)-5,10-methenyltetrahydrofolate + H2O = (6R)-10-formyltetrahydrofolate + H(+). It functions in the pathway one-carbon metabolism; tetrahydrofolate interconversion. Its function is as follows. Catalyzes the oxidation of 5,10-methylenetetrahydrofolate to 5,10-methenyltetrahydrofolate and then the hydrolysis of 5,10-methenyltetrahydrofolate to 10-formyltetrahydrofolate. The protein is Bifunctional protein FolD of Chromohalobacter salexigens (strain ATCC BAA-138 / DSM 3043 / CIP 106854 / NCIMB 13768 / 1H11).